Consider the following 83-residue polypeptide: RNA-binding protein Hfq (83 aa).

Positions 11–71 constitute a Sm domain; the sequence is DTFLNHVRKN…ISTIMPGHPV (61 aa).

It belongs to the Hfq family. Homohexamer.

Its function is as follows. RNA chaperone that binds small regulatory RNA (sRNAs) and mRNAs to facilitate mRNA translational regulation in response to envelope stress, environmental stress and changes in metabolite concentrations. Also binds with high specificity to tRNAs. In Methylobacterium radiotolerans (strain ATCC 27329 / DSM 1819 / JCM 2831 / NBRC 15690 / NCIMB 10815 / 0-1), this protein is RNA-binding protein Hfq.